Here is a 224-residue protein sequence, read N- to C-terminus: Ribose-5-phosphate isomerase A (224 aa).

Substrate-binding positions include 32-35, 85-88, and 98-101; these read TGST, DGAD, and KGGG. The active-site Proton acceptor is the Glu107. Residue Lys125 coordinates substrate.

The protein belongs to the ribose 5-phosphate isomerase family. As to quaternary structure, homodimer.

The enzyme catalyses aldehydo-D-ribose 5-phosphate = D-ribulose 5-phosphate. The protein operates within carbohydrate degradation; pentose phosphate pathway; D-ribose 5-phosphate from D-ribulose 5-phosphate (non-oxidative stage): step 1/1. Catalyzes the reversible conversion of ribose-5-phosphate to ribulose 5-phosphate. This chain is Ribose-5-phosphate isomerase A, found in Pseudomonas fluorescens (strain Pf0-1).